Here is a 442-residue protein sequence, read N- to C-terminus: DDB1- and CUL4-associated factor 12-B (442 aa).

Residues 1–13 (MTRRPVSRKRRAT) are compositionally biased toward basic residues. A disordered region spans residues 1–31 (MTRRPVSRKRRATHGTGPGEQSDWDHSAHKR). 4 WD repeats span residues 132–173 (SHQS…PVCV), 177–215 (GHND…VNKR), 245–284 (PVNC…SKLL), and 333–370 (EQGS…FLED).

It belongs to the WD repeat DCAF12 family. As to quaternary structure, component of the DCX(DCAF12) E3 ubiquitin ligase complex, at least composed of cul4 (cul4a or cul4b), ddb1, dcaf12 and rbx1.

It is found in the cytoplasm. It localises to the cytoskeleton. The protein resides in the microtubule organizing center. Its subcellular location is the centrosome. The protein localises to the nucleus. It participates in protein modification; protein ubiquitination. In terms of biological role, substrate-recognition component of a DCX (DDB1-CUL4-X-box) E3 ubiquitin-protein ligase complex of the DesCEND (destruction via C-end degrons) pathway, which recognizes a C-degron located at the extreme C terminus of target proteins, leading to their ubiquitination and degradation. The C-degron recognized by the DesCEND pathway is usually a motif of less than ten residues and can be present in full-length proteins, truncated proteins or proteolytically cleaved forms. The DCX(DCAF12) complex specifically recognizes proteins with a diglutamate (Glu-Glu) at the C-terminus leading to their ubiquitination and degradation. Also directly recognizes the C-terminal glutamate-leucine (Glu-Leu) degron as an alternative degron in proteins leading to their ubiquitination and degradation. The chain is DDB1- and CUL4-associated factor 12-B (dcaf12-b) from Xenopus laevis (African clawed frog).